We begin with the raw amino-acid sequence, 321 residues long: tRNA-dihydrouridine synthase B (321 aa).

Residues 16-18 and Gln70 each bind FMN; that span reads PMA. Residue Cys100 is the Proton donor of the active site. FMN contacts are provided by residues Lys139, 200–202, and 224–225; these read NGD and GR.

This sequence belongs to the Dus family. DusB subfamily. It depends on FMN as a cofactor.

The enzyme catalyses a 5,6-dihydrouridine in tRNA + NAD(+) = a uridine in tRNA + NADH + H(+). It carries out the reaction a 5,6-dihydrouridine in tRNA + NADP(+) = a uridine in tRNA + NADPH + H(+). Functionally, catalyzes the synthesis of 5,6-dihydrouridine (D), a modified base found in the D-loop of most tRNAs, via the reduction of the C5-C6 double bond in target uridines. This Yersinia pestis protein is tRNA-dihydrouridine synthase B.